Here is a 322-residue protein sequence, read N- to C-terminus: Cytochrome c biogenesis protein CcsA (322 aa).

7 consecutive transmembrane segments (helical) span residues isoleucine 9–leucine 29, glycine 43–glycine 63, leucine 70–isoleucine 90, methionine 142–isoleucine 162, valine 226–asparagine 246, glutamate 259–histidine 274, and alanine 287–leucine 307.

Belongs to the CcmF/CycK/Ccl1/NrfE/CcsA family. In terms of assembly, may interact with Ccs1.

It localises to the plastid. It is found in the chloroplast thylakoid membrane. In terms of biological role, required during biogenesis of c-type cytochromes (cytochrome c6 and cytochrome f) at the step of heme attachment. The protein is Cytochrome c biogenesis protein CcsA of Chloranthus spicatus (Chulantree).